The primary structure comprises 36 residues: Termicin (36 aa).

Disulfide bonds link Cys-2–Cys-24, Cys-7–Cys-29, and Cys-11–Cys-31. Gly-36 is subject to Glycine amide.

Expressed in salivary glands and hemocytes.

The protein resides in the secreted. In terms of biological role, weak activity against Gram-positive bacteria B.megaterium, S.pyogenes and M.luteus, strong activity against yeasts C.albicans, C.neoformans and S.cerevisiae and filamentous fungi F.oxysporum, F.culmorum, N.crassa and N.hematococca. Less active against filamentous fungus T.viride. Inactive against Gram-positive bacteria A.viridans and S.aureus, filamentous fungi A.fumigatus and B.bassiana and yeast C.glabrata. The chain is Termicin from Pseudacanthotermes spiniger.